Consider the following 132-residue polypeptide: ATP synthase epsilon chain, chloroplastic (132 aa).

The protein belongs to the ATPase epsilon chain family. In terms of assembly, F-type ATPases have 2 components, CF(1) - the catalytic core - and CF(0) - the membrane proton channel. CF(1) has five subunits: alpha(3), beta(3), gamma(1), delta(1), epsilon(1). CF(0) has three main subunits: a, b and c.

It localises to the plastid. Its subcellular location is the chloroplast thylakoid membrane. Functionally, produces ATP from ADP in the presence of a proton gradient across the membrane. In Adiantum capillus-veneris (Maidenhair fern), this protein is ATP synthase epsilon chain, chloroplastic.